A 90-amino-acid chain; its full sequence is Small ribosomal subunit protein bS16 (90 aa).

It belongs to the bacterial ribosomal protein bS16 family.

This is Small ribosomal subunit protein bS16 from Brevibacillus brevis (strain 47 / JCM 6285 / NBRC 100599).